The sequence spans 42 residues: Serine/threonine-protein phosphatase 5 (42 aa).

The segment at 38–42 (QLGVM) is required for autoinhibition.

Belongs to the PPP phosphatase family. PP-5 (PP-T) subfamily. Probably forms a complex composed of chaperones HSP90 and HSP70, co-chaperones STIP1/HOP, CDC37, PPP5C, PTGES3/p23, TSC1 and client protein TSC2. Probably forms a complex composed of chaperones HSP90 and HSP70, co-chaperones CDC37, PPP5C, TSC1 and client protein TSC2, CDK4, AKT, RAF1 and NR3C1; this complex does not contain co-chaperones STIP1/HOP and PTGES3/p23. Part of a complex with HSP90/HSP90AA1 and steroid receptors. Interacts (via TPR repeats) with HSP90AA1 (via TPR repeat-binding motif) or HSPA1A/HSPA1B; the interaction is direct and activates the phosphatase activity. Dissociates from HSPA1A/HSPA1B and HSP90AA1 in response to arachidonic acid. Interacts with CPNE1 (via VWFA domain). Interacts with CDC16, CDC27. Interacts with KLHDC10 (via the 6 Kelch repeats); inhibits the phosphatase activity on MAP3K5. Interacts with ATM and ATR; both interactions are induced by DNA damage and enhance ATM and ATR kinase activity. Interacts with RAD17; reduced by DNA damage. Interacts with nuclear receptors such as NR3C1/GCR and PPARG (activated by agonist); regulates their transactivation activities. Interacts (via TPR repeats) with S100 proteins S100A1, S100A2, S100A6, S100B and S100P; the interactions are calcium-dependent, strongly activate PPP5C phosphatase activity and compete with HSP90AA1 and MAP3K5 interactions. Interacts with SMAD2 and SMAD3 but not with SMAD1; decreases SMAD3 phosphorylation and protein levels. Interacts (via TPR repeats) with CRY1 and CRY2; the interaction with CRY2 down-regulates the phosphatase activity on CSNK1E. Interacts (via TPR repeats) with the active form of RAC1, GNA12 or GNA13; these interactions activate the phosphatase activity and translocate PPP5C to the cell membrane. Interacts with FLCN. Requires Mg(2+) as cofactor. Mn(2+) is required as a cofactor. Activated by at least two different proteolytic cleavages producing a 56 kDa and a 50 kDa form.

The protein localises to the nucleus. It is found in the cytoplasm. Its subcellular location is the cell membrane. The catalysed reaction is O-phospho-L-seryl-[protein] + H2O = L-seryl-[protein] + phosphate. It carries out the reaction O-phospho-L-threonyl-[protein] + H2O = L-threonyl-[protein] + phosphate. Autoinhibited. In the autoinhibited state, the TPR domain interacts with the catalytic region and prevents substrate access to the catalytic pocket. Allosterically activated by various polyunsaturated fatty acids, free long-chain fatty-acids and long-chain fatty acyl-CoA esters, arachidonic acid being the most effective activator. HSP90A and probably RAC1, GNA12 and GNA13 can also release the autoinhibition by the TPR repeat. Activation by RAC1, GNA12 and GNA13 is synergistic with the one produced by fatty acids binding. Inhibited by okadaic acid. In terms of biological role, serine/threonine-protein phosphatase that dephosphorylates a myriad of proteins involved in different signaling pathways including the kinases CSNK1E, ASK1/MAP3K5, PRKDC and RAF1, the nuclear receptors NR3C1, PPARG, ESR1 and ESR2, SMAD proteins and TAU/MAPT. Implicated in wide ranging cellular processes, including apoptosis, differentiation, DNA damage response, cell survival, regulation of ion channels or circadian rhythms, in response to steroid and thyroid hormones, calcium, fatty acids, TGF-beta as well as oxidative and genotoxic stresses. Participates in the control of DNA damage response mechanisms such as checkpoint activation and DNA damage repair through, for instance, the regulation ATM/ATR-signaling and dephosphorylation of PRKDC and TP53BP1. Inhibits ASK1/MAP3K5-mediated apoptosis induced by oxidative stress. Plays a positive role in adipogenesis, mainly through the dephosphorylation and activation of PPARG transactivation function. Also dephosphorylates and inhibits the anti-adipogenic effect of NR3C1. Regulates the circadian rhythms, through the dephosphorylation and activation of CSNK1E. May modulate TGF-beta signaling pathway by the regulation of SMAD3 phosphorylation and protein expression levels. Dephosphorylates and may play a role in the regulation of TAU/MAPT. Through their dephosphorylation, may play a role in the regulation of ions channels such as KCNH2. Dephosphorylate FNIP1, disrupting interaction with HSP90AA1/Hsp90. In Oryctolagus cuniculus (Rabbit), this protein is Serine/threonine-protein phosphatase 5 (PPP5C).